The chain runs to 264 residues: Type 1 encapsulin shell protein (264 aa).

The protein belongs to the encapsulin family. Family 1 subfamily. Forms hollow shells composed of 60 subunits. Monomers probably form pentamers which assemble into the shell. There are 12 pores where the pentamers meet as well as 3-fold axis channels and dimer channels; none are larger than 3-4 Angstroms in diameter. The N-terminus of the protein is inside the shell, the C-terminus is outside.

Its subcellular location is the encapsulin nanocompartment. Its function is as follows. Shell component of a type 1 encapsulin nanocompartment. Assembles into proteinaceous shells 21-24 nm in diameter. Empty organelles can be expressed in E.coli. Cargo proteins (DypB) are targeted to the interior via their C-terminal extensions. This Rhodococcus erythropolis (strain PR4 / NBRC 100887) protein is Type 1 encapsulin shell protein.